The following is a 374-amino-acid chain: Cytochrome b (374 aa).

Transmembrane regions (helical) follow at residues 25–45 (FGSM…FLAI), 69–90 (WIIQ…YMHI), 105–125 (WLSG…GYVL), and 170–190 (FFAL…IHII). Histidine 75 and histidine 89 together coordinate heme b. Residues histidine 174 and histidine 188 each coordinate heme b. Histidine 193 contributes to the a ubiquinone binding site. Transmembrane regions (helical) follow at residues 218–238 (YKDM…LSFT), 280–300 (LGGA…PFTH), 312–332 (LAQI…WTAT), and 339–358 (FITI…MINP).

It belongs to the cytochrome b family. As to quaternary structure, the cytochrome bc1 complex contains 3 respiratory subunits (MT-CYB, CYC1 and UQCRFS1), 2 core proteins (UQCRC1 and UQCRC2) and probably 6 low-molecular weight proteins. Heme b serves as cofactor.

The protein resides in the mitochondrion inner membrane. In terms of biological role, component of the ubiquinol-cytochrome c reductase complex (complex III or cytochrome b-c1 complex) that is part of the mitochondrial respiratory chain. The b-c1 complex mediates electron transfer from ubiquinol to cytochrome c. Contributes to the generation of a proton gradient across the mitochondrial membrane that is then used for ATP synthesis. This is Cytochrome b (MT-CYB) from Calliophis bivirgatus (Blue Malaysian coral snake).